Reading from the N-terminus, the 302-residue chain is MTLPPLSHLDRLEAESIHILREVAAEFRAPVMLYSVGKDSSVLLHLLLKAFAPSRPPIPLLHIDTRWKFREMIAFRDRRAAETGVDLRVHINPDGVAQDVGPISHGAAVHTDIMKTQGLKQALEHGGFDAAIGGARRDEEKSRAKERVFSFRTARHRWDPKNQRPELWNLYNARTGPGESVRVFPLSNWTELDIWLYIYREKIPVVPLYFAAPRPVVERDGAWIMVDDARLPLRPGETPQLRSVRFRTLGCYPLTGAIDSDADTLEAVIAEMLVSTSSERQGRMIDHAPGASMEQKKLEGYF.

It belongs to the PAPS reductase family. CysD subfamily. In terms of assembly, heterodimer composed of CysD, the smaller subunit, and CysN.

It catalyses the reaction sulfate + ATP + H(+) = adenosine 5'-phosphosulfate + diphosphate. Its pathway is sulfur metabolism; hydrogen sulfide biosynthesis; sulfite from sulfate: step 1/3. In terms of biological role, with CysN forms the ATP sulfurylase (ATPS) that catalyzes the adenylation of sulfate producing adenosine 5'-phosphosulfate (APS) and diphosphate, the first enzymatic step in sulfur assimilation pathway. APS synthesis involves the formation of a high-energy phosphoric-sulfuric acid anhydride bond driven by GTP hydrolysis by CysN coupled to ATP hydrolysis by CysD. The protein is Sulfate adenylyltransferase subunit 2 of Xanthomonas euvesicatoria pv. vesicatoria (strain 85-10) (Xanthomonas campestris pv. vesicatoria).